The chain runs to 225 residues: 2-C-methyl-D-erythritol 4-phosphate cytidylyltransferase (225 aa).

It belongs to the IspD/TarI cytidylyltransferase family. IspD subfamily.

It carries out the reaction 2-C-methyl-D-erythritol 4-phosphate + CTP + H(+) = 4-CDP-2-C-methyl-D-erythritol + diphosphate. It functions in the pathway isoprenoid biosynthesis; isopentenyl diphosphate biosynthesis via DXP pathway; isopentenyl diphosphate from 1-deoxy-D-xylulose 5-phosphate: step 2/6. Its function is as follows. Catalyzes the formation of 4-diphosphocytidyl-2-C-methyl-D-erythritol from CTP and 2-C-methyl-D-erythritol 4-phosphate (MEP). This Haemophilus influenzae (strain PittGG) protein is 2-C-methyl-D-erythritol 4-phosphate cytidylyltransferase.